Reading from the N-terminus, the 318-residue chain is Type II restriction enzyme HaeIII (318 aa).

It catalyses the reaction Endonucleolytic cleavage of DNA to give specific double-stranded fragments with terminal 5'-phosphates.. A P subtype restriction enzyme that recognizes the double-stranded sequence 5'-GGCC-3' and cleaves after G-2. In Haemophilus aegyptius, this protein is Type II restriction enzyme HaeIII (haeIIIR).